A 605-amino-acid chain; its full sequence is Putative glutaminase 2 (605 aa).

Substrate-binding residues include S213, N262, E308, N315, Y342, Y394, and V412. ANK repeat units lie at residues D480–T509 and D513–K543. Positions K569–S581 are enriched in basic and acidic residues. Residues K569–D605 are disordered. Residues D586–G595 show a composition bias toward acidic residues.

The protein belongs to the glutaminase family.

The enzyme catalyses L-glutamine + H2O = L-glutamate + NH4(+). In Caenorhabditis elegans, this protein is Putative glutaminase 2 (glna-2).